The sequence spans 292 residues: Phosphatidylserine decarboxylase proenzyme (292 aa).

Active-site charge relay system; for autoendoproteolytic cleavage activity residues include aspartate 98, histidine 153, and serine 254. The active-site Schiff-base intermediate with substrate; via pyruvic acid; for decarboxylase activity is the serine 254. The residue at position 254 (serine 254) is a Pyruvic acid (Ser); by autocatalysis.

Belongs to the phosphatidylserine decarboxylase family. PSD-B subfamily. Prokaryotic type I sub-subfamily. In terms of assembly, heterodimer of a large membrane-associated beta subunit and a small pyruvoyl-containing alpha subunit. Pyruvate serves as cofactor. Post-translationally, is synthesized initially as an inactive proenzyme. Formation of the active enzyme involves a self-maturation process in which the active site pyruvoyl group is generated from an internal serine residue via an autocatalytic post-translational modification. Two non-identical subunits are generated from the proenzyme in this reaction, and the pyruvate is formed at the N-terminus of the alpha chain, which is derived from the carboxyl end of the proenzyme. The autoendoproteolytic cleavage occurs by a canonical serine protease mechanism, in which the side chain hydroxyl group of the serine supplies its oxygen atom to form the C-terminus of the beta chain, while the remainder of the serine residue undergoes an oxidative deamination to produce ammonia and the pyruvoyl prosthetic group on the alpha chain. During this reaction, the Ser that is part of the protease active site of the proenzyme becomes the pyruvoyl prosthetic group, which constitutes an essential element of the active site of the mature decarboxylase.

The protein resides in the cell membrane. It carries out the reaction a 1,2-diacyl-sn-glycero-3-phospho-L-serine + H(+) = a 1,2-diacyl-sn-glycero-3-phosphoethanolamine + CO2. The protein operates within phospholipid metabolism; phosphatidylethanolamine biosynthesis; phosphatidylethanolamine from CDP-diacylglycerol: step 2/2. Catalyzes the formation of phosphatidylethanolamine (PtdEtn) from phosphatidylserine (PtdSer). This Halorhodospira halophila (strain DSM 244 / SL1) (Ectothiorhodospira halophila (strain DSM 244 / SL1)) protein is Phosphatidylserine decarboxylase proenzyme.